Reading from the N-terminus, the 747-residue chain is DNA ligase (747 aa).

NAD(+) contacts are provided by residues 33–37 (DEEYD), 83–84 (SL), and Glu113. The active-site N6-AMP-lysine intermediate is Lys115. Residues Arg136, Glu174, Lys299, and Lys323 each coordinate NAD(+). Positions 417, 420, 436, and 442 each coordinate Zn(2+). One can recognise a BRCT domain in the interval 659-747 (TGGGVLSGLT…GPGALPEVAE (89 aa)).

The protein belongs to the NAD-dependent DNA ligase family. LigA subfamily. The cofactor is Mg(2+). Mn(2+) is required as a cofactor.

It catalyses the reaction NAD(+) + (deoxyribonucleotide)n-3'-hydroxyl + 5'-phospho-(deoxyribonucleotide)m = (deoxyribonucleotide)n+m + AMP + beta-nicotinamide D-nucleotide.. DNA ligase that catalyzes the formation of phosphodiester linkages between 5'-phosphoryl and 3'-hydroxyl groups in double-stranded DNA using NAD as a coenzyme and as the energy source for the reaction. It is essential for DNA replication and repair of damaged DNA. This is DNA ligase from Leifsonia xyli subsp. xyli (strain CTCB07).